Here is a 647-residue protein sequence, read N- to C-terminus: Replication protein E1 (647 aa).

A Nuclear localization signal motif is present at residues 86-88 (KRK). Disordered regions lie at residues 88 to 107 (KFTSSPESAGQDGVEKHGSP) and 146 to 178 (QVDGQNGDWQSNSSQSSGVGASNSDVSCTSIED). Phosphoserine; by host occurs at positions 92 and 106. Residues 149–169 (GQNGDWQSNSSQSSGVGASNS) are compositionally biased toward low complexity. The segment at 182 to 348 (NSNRTLKSIQ…QTVLQHSFDN (167 aa)) is DNA-binding region. An SF3 helicase domain is found at 447–597 (IEFTAFLDAF…FPFDENGNPI (151 aa)). 473-480 (GPANTGKS) is an ATP binding site. A Glycyl lysine isopeptide (Lys-Gly) (interchain with G-Cter in SUMO) cross-link involves residue K554.

Belongs to the papillomaviridae E1 protein family. As to quaternary structure, can form hexamers. Interacts with E2 protein; this interaction increases E1 DNA binding specificity. Interacts with host DNA polymerase subunit POLA2. Interacts with host single stranded DNA-binding protein RPA1. Interacts with host TOP1; this interaction stimulates the enzymatic activity of TOP1. Post-translationally, phosphorylated. In terms of processing, sumoylated.

Its subcellular location is the host nucleus. The catalysed reaction is Couples ATP hydrolysis with the unwinding of duplex DNA by translocating in the 3'-5' direction.. It catalyses the reaction ATP + H2O = ADP + phosphate + H(+). In terms of biological role, ATP-dependent DNA 3'-5' helicase required for initiation of viral DNA replication. It forms a complex with the viral E2 protein. The E1-E2 complex binds to the replication origin which contains binding sites for both proteins. During the initial step, a dimer of E1 interacts with a dimer of protein E2 leading to a complex that binds the viral origin of replication with high specificity. Then, a second dimer of E1 displaces the E2 dimer in an ATP-dependent manner to form the E1 tetramer. Following this, two E1 monomers are added to each half of the site, which results in the formation of two E1 trimers on the viral ori. Subsequently, two hexamers will be created. The double hexamer acts as a bi-directional helicase machinery and unwinds the viral DNA and then recruits the host DNA polymerase to start replication. This Homo sapiens (Human) protein is Replication protein E1.